Reading from the N-terminus, the 216-residue chain is uncharacterized protein (216 aa).

S-adenosyl-L-methionine contacts are provided by G56 and E77.

Belongs to the methyltransferase superfamily. YrrT family.

Could be a S-adenosyl-L-methionine-dependent methyltransferase. This is an uncharacterized protein from Alkaliphilus oremlandii (strain OhILAs) (Clostridium oremlandii (strain OhILAs)).